Reading from the N-terminus, the 158-residue chain is ATP synthase subunit delta, mitochondrial (158 aa).

A mitochondrion-targeting transit peptide spans 1-22 (MFRLTSARALFRVANVAARRTY).

The protein belongs to the ATPase epsilon chain family. As to quaternary structure, F-type ATPases have 2 components, CF(1) - the catalytic core - and CF(0) - the membrane proton channel. CF(1) has five subunits: alpha(3), beta(3), gamma(1), delta(1), epsilon(1). CF(0) has three main subunits: a, b and c.

It localises to the mitochondrion. Its subcellular location is the mitochondrion inner membrane. In terms of biological role, mitochondrial membrane ATP synthase (F(1)F(0) ATP synthase or Complex V) produces ATP from ADP in the presence of a proton gradient across the membrane which is generated by electron transport complexes of the respiratory chain. F-type ATPases consist of two structural domains, F(1) - containing the extramembraneous catalytic core, and F(0) - containing the membrane proton channel, linked together by a central stalk and a peripheral stalk. During catalysis, ATP turnover in the catalytic domain of F(1) is coupled via a rotary mechanism of the central stalk subunits to proton translocation. Part of the complex F(1) domain and of the central stalk which is part of the complex rotary element. Rotation of the central stalk against the surrounding alpha(3)beta(3) subunits leads to hydrolysis of ATP in three separate catalytic sites on the beta subunits. The protein is ATP synthase subunit delta, mitochondrial (ATP16) of Eremothecium gossypii (strain ATCC 10895 / CBS 109.51 / FGSC 9923 / NRRL Y-1056) (Yeast).